The following is a 332-amino-acid chain: Probable farnesyl diphosphate synthase (332 aa).

Residues Lys75, Arg78, and His107 each contribute to the isopentenyl diphosphate site. The Mg(2+) site is built by Asp114 and Asp120. Arg125 contributes to the (2E)-geranyl diphosphate binding site. Arg126 serves as a coordination point for isopentenyl diphosphate. (2E)-geranyl diphosphate contacts are provided by Lys208, Gln250, and Lys267.

This sequence belongs to the FPP/GGPP synthase family. It depends on Mg(2+) as a cofactor.

It localises to the cytoplasm. The enzyme catalyses isopentenyl diphosphate + (2E)-geranyl diphosphate = (2E,6E)-farnesyl diphosphate + diphosphate. The sequence is that of Probable farnesyl diphosphate synthase from Sinorhizobium fredii (strain NBRC 101917 / NGR234).